The sequence spans 56 residues: UPF0434 protein Sden_2197 (56 aa).

The protein belongs to the UPF0434 family.

The sequence is that of UPF0434 protein Sden_2197 from Shewanella denitrificans (strain OS217 / ATCC BAA-1090 / DSM 15013).